Here is a 462-residue protein sequence, read N- to C-terminus: Centrosomal protein of 55 kDa (462 aa).

Positions 1-11 (MSSRSPKDLIK) are enriched in basic and acidic residues. The interval 1–25 (MSSRSPKDLIKSKWGSRPSSSKSDT) is disordered. A compositionally biased stretch (low complexity) spans 12–23 (SKWGSRPSSSKS). Coiled-coil stretches lie at residues 50 to 185 (KVAN…QQWL) and 228 to 400 (YLQE…KQLH). Residues Ser-96 and Ser-99 each carry the phosphoserine modification. Residues 157 to 235 (ANCFNSSMNS…EGYLQEEKQK (79 aa)) are interaction with TSG101. The tract at residues 160–214 (FNSSMNSIHEKEMQLKDALEKNQQWLVYDQQREAYVKGLLAKIFELEKRTETAAA) is interaction with PDCD6IP. Positions 354 to 462 (QMQACTLDFE…LLVHVEYCMK (109 aa)) are required for localization to the interphase centrosome and to the midbody during cytokinesis. Residues Ser-423 and Ser-426 each carry the phosphoserine modification. Position 428 is a phosphothreonine (Thr-428). Ser-434 carries the phosphoserine; by PLK1 modification.

In terms of assembly, homodimer. Interacts (phosphorylated on Ser-423 and Ser-426) with PLK1; the interaction is indirect via the MTMR3:MTMR4 heterooligomer, occurs during early mitosis, regulates the phosphorylation of CEP55 by PLK1 and its recruitment to the midbody where it can mediate cell abscission. Interacts with AKAP9/CG-NAP; the interaction occurs in interphase and is lost upon mitotic entry. Interacts with PCNT/Kendrin; the interaction occurs in interphase and is lost upon mitotic entry. Directly interacts with PDCD6IP; this interaction is required for PDCD6IP targeting to the midbody; CEP55 binds PDCD6IP in a 2:1 stoichiometry; PDCD6IP competes with TSG101 for the same binding site. Interacts with TSG101; TSG101 competes with PDCD6IP for the same binding site; interaction is required for cytokinesis. Interacts with MVB12A, VPS37B, VPS37C and VPS28. There is a hierachy of phosphorylation, where both Ser-423 and Ser-426 are phosphorylated at the onset of mitosis, prior to Ser-434. Phosphorylation at Ser-423 and Ser-426 is required for dissociation from the centrosome at the G2/M boundary. Phosphorylation at the 3 sites, Ser-423, Ser-426 and Ser-434, is required for protein function at the final stages of cell division to complete cytokinesis successfully.

The protein resides in the cytoplasm. It is found in the cytoskeleton. It localises to the microtubule organizing center. Its subcellular location is the centrosome. The protein localises to the centriole. The protein resides in the cleavage furrow. It is found in the midbody. It localises to the midbody ring. In terms of biological role, plays a role in mitotic exit and cytokinesis. Recruits PDCD6IP and TSG101 to midbody during cytokinesis. Required for successful completion of cytokinesis. Not required for microtubule nucleation. Plays a role in the development of the brain and kidney. The polypeptide is Centrosomal protein of 55 kDa (Rattus norvegicus (Rat)).